A 486-amino-acid chain; its full sequence is Aspartyl/glutamyl-tRNA(Asn/Gln) amidotransferase subunit B (486 aa).

Belongs to the GatB/GatE family. GatB subfamily. Heterotrimer of A, B and C subunits.

The enzyme catalyses L-glutamyl-tRNA(Gln) + L-glutamine + ATP + H2O = L-glutaminyl-tRNA(Gln) + L-glutamate + ADP + phosphate + H(+). The catalysed reaction is L-aspartyl-tRNA(Asn) + L-glutamine + ATP + H2O = L-asparaginyl-tRNA(Asn) + L-glutamate + ADP + phosphate + 2 H(+). Its function is as follows. Allows the formation of correctly charged Asn-tRNA(Asn) or Gln-tRNA(Gln) through the transamidation of misacylated Asp-tRNA(Asn) or Glu-tRNA(Gln) in organisms which lack either or both of asparaginyl-tRNA or glutaminyl-tRNA synthetases. The reaction takes place in the presence of glutamine and ATP through an activated phospho-Asp-tRNA(Asn) or phospho-Glu-tRNA(Gln). This chain is Aspartyl/glutamyl-tRNA(Asn/Gln) amidotransferase subunit B, found in Leptospira interrogans serogroup Icterohaemorrhagiae serovar Lai (strain 56601).